The sequence spans 86 residues: Colicin-E9 immunity protein (86 aa).

It belongs to the colicins ColE2/ColE8/ColE9 and pyocins S1/S2 family.

Its function is as follows. This protein is able to protect a cell, which harbors the plasmid ColE9 encoding colicin E9, against colicin E9, it binds specifically to the DNase-type colicin and inhibits its bactericidal activity. This Escherichia coli protein is Colicin-E9 immunity protein (imm).